A 250-amino-acid chain; its full sequence is Cobalt transport protein CbiM (250 aa).

A signal peptide spans 1 to 27; that stretch reads MKKPLFFIASACVTIYILFALSPSVYA. A run of 6 helical transmembrane segments spans residues 33-53, 70-90, 102-122, 134-154, 168-188, and 208-228; these read GFLPWQWALVWWLLFLPFFLV, LLLALATAFTFVLSALKIPSV, LGALLFGPFVMTVIGTAVLLF, TLGANAFSMAVVGPLVAYVLF, VFLAAMMADLATYVMTSIQLA, and IFAVTQIPLAITEGLLTVVVW.

This sequence belongs to the CbiM family. In terms of assembly, forms an energy-coupling factor (ECF) transporter complex composed of an ATP-binding protein (A component, CbiO), a transmembrane protein (T component, CbiQ) and 2 possible substrate-capture proteins (S components, CbiM and CbiN) of unknown stoichimetry.

It is found in the cell membrane. The protein operates within cofactor biosynthesis; adenosylcobalamin biosynthesis. Its function is as follows. Part of the energy-coupling factor (ECF) transporter complex CbiMNOQ involved in cobalt import. The chain is Cobalt transport protein CbiM from Anoxybacillus flavithermus (strain DSM 21510 / WK1).